The following is a 317-amino-acid chain: Transcription factor EC (317 aa).

A necessary for transcriptional transactivation region spans residues 1 to 90 (MTFDCRVCDQ…GLTDAPCPSI (90 aa)). The 54-residue stretch at 110–163 (QKKDNHNLIERRRRYNINYRIKELGTLIPKSNDPDMRWNKGTILKASVDYIKWL) folds into the bHLH domain. Residues 242 to 317 (TSPEFYEQAV…SLSSEDGDEL (76 aa)) form a necessary for transcriptional transactivation region.

The protein belongs to the MiT/TFE family. Homodimer. Forms heterodimers with MITF. Interacts with MITF. Forms heterodimers with TFE3. In terms of tissue distribution, expressed in osteoclast-like cells (at protein level). Expressed in cells of the mononuclear phagocyte lineage. Expressed in macrophages and in osteoclast-like cells.

The protein localises to the nucleus. In terms of biological role, transcriptional regulator that acts as a repressor or an activator. Acts as a transcriptional transactivator on the proximal promoter region of the tartrate-resistant acid phosphatase (TRAP) E-box containing promoter. Collaborates with MITF in target gene activation. Acts as a transcriptional repressor on minimal promoter containing element F (that includes an E-box sequence). Binds to element F in an E-box sequence-specific manner. Acts as a transcriptional repressor on minimal promoter containing mu E3 enhancer sequence. Binds to mu E3 DNA sequence of the immunoglobulin heavy-chain gene enhancer. Binds DNA in a homo- or heterodimeric form. This chain is Transcription factor EC (Tfec), found in Mus musculus (Mouse).